Consider the following 270-residue polypeptide: S-adenosylmethionine decarboxylase proenzyme (270 aa).

Serine 120 acts as the Schiff-base intermediate with substrate; via pyruvic acid in catalysis. Serine 120 is subject to Pyruvic acid (Ser); by autocatalysis. The active-site Proton acceptor; for processing activity is the histidine 125. Catalysis depends on cysteine 148, which acts as the Proton donor; for catalytic activity.

The protein belongs to the prokaryotic AdoMetDC family. Type 2 subfamily. As to quaternary structure, heterooctamer of four alpha and four beta chains arranged as a tetramer of alpha/beta heterodimers. Pyruvate serves as cofactor. Post-translationally, is synthesized initially as an inactive proenzyme. Formation of the active enzyme involves a self-maturation process in which the active site pyruvoyl group is generated from an internal serine residue via an autocatalytic post-translational modification. Two non-identical subunits are generated from the proenzyme in this reaction, and the pyruvate is formed at the N-terminus of the alpha chain, which is derived from the carboxyl end of the proenzyme. The post-translation cleavage follows an unusual pathway, termed non-hydrolytic serinolysis, in which the side chain hydroxyl group of the serine supplies its oxygen atom to form the C-terminus of the beta chain, while the remainder of the serine residue undergoes an oxidative deamination to produce ammonia and the pyruvoyl group blocking the N-terminus of the alpha chain.

The catalysed reaction is S-adenosyl-L-methionine + H(+) = S-adenosyl 3-(methylsulfanyl)propylamine + CO2. Its pathway is amine and polyamine biosynthesis; S-adenosylmethioninamine biosynthesis; S-adenosylmethioninamine from S-adenosyl-L-methionine: step 1/1. Its function is as follows. Catalyzes the decarboxylation of S-adenosylmethionine to S-adenosylmethioninamine (dcAdoMet), the propylamine donor required for the synthesis of the polyamines spermine and spermidine from the diamine putrescine. This chain is S-adenosylmethionine decarboxylase proenzyme, found in Alkaliphilus oremlandii (strain OhILAs) (Clostridium oremlandii (strain OhILAs)).